The following is a 525-amino-acid chain: GMP synthase [glutamine-hydrolyzing] (525 aa).

The Glutamine amidotransferase type-1 domain occupies 9 to 207 (RILILDFGSQ…VLDICGCAAL (199 aa)). The active-site Nucleophile is Cys86. Active-site residues include His181 and Glu183. The GMPS ATP-PPase domain maps to 208 to 400 (WTPSNIVDDA…LGLPYDMVYR (193 aa)). 235–241 (SGGVDSS) contacts ATP.

Homodimer.

It carries out the reaction XMP + L-glutamine + ATP + H2O = GMP + L-glutamate + AMP + diphosphate + 2 H(+). It participates in purine metabolism; GMP biosynthesis; GMP from XMP (L-Gln route): step 1/1. Functionally, catalyzes the synthesis of GMP from XMP. In Pseudomonas aeruginosa (strain LESB58), this protein is GMP synthase [glutamine-hydrolyzing].